Reading from the N-terminus, the 717-residue chain is ATP-dependent zinc metalloprotease FtsH (717 aa).

At 1 to 9 (MKNASRIFK) the chain is on the cytoplasmic side. A helical transmembrane segment spans residues 10–30 (GPLIWILLCIGLIIVFLQFAG). The Extracellular segment spans residues 31-111 (SGNGYKDIPT…SWQGENPGQS (81 aa)). A helical membrane pass occupies residues 112–132 (IWKALLINFLPFVIILLFFLW). At 133 to 717 (AMNAAQGMGG…NGNPWGPPRS (585 aa)) the chain is on the cytoplasmic side. An ATP-binding site is contributed by 207–214 (GPPGTGKT). Histidine 429 serves as a coordination point for Zn(2+). Glutamate 430 is a catalytic residue. 2 residues coordinate Zn(2+): histidine 433 and aspartate 505. The interval 617–717 (AFTGSDKRVP…NGNPWGPPRS (101 aa)) is disordered. Residues 691-717 (PEPPSPTHPGEGPQPPSNGNPWGPPRS) are compositionally biased toward pro residues.

This sequence in the central section; belongs to the AAA ATPase family. The protein in the C-terminal section; belongs to the peptidase M41 family. Homohexamer. Zn(2+) serves as cofactor.

It is found in the cell membrane. Functionally, acts as a processive, ATP-dependent zinc metallopeptidase for both cytoplasmic and membrane proteins. Plays a role in the quality control of integral membrane proteins. The sequence is that of ATP-dependent zinc metalloprotease FtsH from Cutibacterium acnes (strain SK137) (Propionibacterium acnes).